Reading from the N-terminus, the 312-residue chain is Ribosomal RNA small subunit methyltransferase H (312 aa).

Residues 33–35 (GGY), Asp-51, Phe-78, Asp-97, and Gln-104 contribute to the S-adenosyl-L-methionine site.

The protein belongs to the methyltransferase superfamily. RsmH family.

The protein localises to the cytoplasm. It catalyses the reaction cytidine(1402) in 16S rRNA + S-adenosyl-L-methionine = N(4)-methylcytidine(1402) in 16S rRNA + S-adenosyl-L-homocysteine + H(+). In terms of biological role, specifically methylates the N4 position of cytidine in position 1402 (C1402) of 16S rRNA. The protein is Ribosomal RNA small subunit methyltransferase H of Orientia tsutsugamushi (strain Ikeda) (Rickettsia tsutsugamushi).